The primary structure comprises 884 residues: Blastomere cadherin (884 aa).

A signal peptide spans 1–26 (MGGTDKFRYPSVWLCGLLCLLQVVPS). The propeptide occupies 27 to 157 (INVDVSGCQP…KHTGLKRKKR (131 aa)). 5 Cadherin domains span residues 158–265 (DWVI…RPKF), 266–378 (TQPV…APIF), 379–489 (DPKT…APVF), 490–595 (VPVV…DNGP), and 596–706 (VPSP…GFDL). Over 158 to 706 (DWVIPPIKVS…QEKLVAGFDL (549 aa)) the chain is Extracellular. 3 N-linked (GlcNAc...) asparagine glycosylation sites follow: asparagine 427, asparagine 560, and asparagine 683. A helical transmembrane segment spans residues 707–730 (PIILVILGSILALLILSLLLLLFL). Residues 731–884 (KRKKVVKEPL…YGGDDDDDEE (154 aa)) are Cytoplasmic-facing.

As to expression, expressed in pituitary gland, lung and kidney.

The protein localises to the cell membrane. Its function is as follows. Cadherins are calcium-dependent cell adhesion proteins. They preferentially interact with themselves in a homophilic manner in connecting cells; cadherins may thus contribute to the sorting of heterogeneous cell types. The polypeptide is Blastomere cadherin (Xenopus laevis (African clawed frog)).